A 90-amino-acid polypeptide reads, in one-letter code: Probable Fe(2+)-trafficking protein (90 aa).

This sequence belongs to the Fe(2+)-trafficking protein family.

Functionally, could be a mediator in iron transactions between iron acquisition and iron-requiring processes, such as synthesis and/or repair of Fe-S clusters in biosynthetic enzymes. The sequence is that of Probable Fe(2+)-trafficking protein from Marinobacter nauticus (strain ATCC 700491 / DSM 11845 / VT8) (Marinobacter aquaeolei).